Reading from the N-terminus, the 539-residue chain is O-phosphoserine--tRNA(Cys) ligase (539 aa).

Substrate contacts are provided by residues 188 to 190 (HMT), 233 to 235 (SAS), 275 to 276 (YY), and Asn327.

It belongs to the class-II aminoacyl-tRNA synthetase family. O-phosphoseryl-tRNA(Cys) synthetase subfamily. In terms of assembly, homotetramer. Interacts with SepCysS.

It catalyses the reaction tRNA(Cys) + O-phospho-L-serine + ATP = O-phospho-L-seryl-tRNA(Cys) + AMP + diphosphate. Catalyzes the attachment of O-phosphoserine (Sep) to tRNA(Cys). This is O-phosphoserine--tRNA(Cys) ligase from Methanosarcina barkeri (strain Fusaro / DSM 804).